We begin with the raw amino-acid sequence, 684 residues long: Protein ecdysoneless (684 aa).

Over residues 491 to 501 the composition is skewed to acidic residues; the sequence is EPELDSDDDEP. Disordered regions lie at residues 491–528 and 603–624; these read EPEL…CQRN and TSVG…EDDF.

This sequence belongs to the ECD family. Expressed in the ecdysone-producing larval ring gland, nervous system, imaginal disks and gonads.

The protein resides in the cytoplasm. Functionally, required in both the follicle cells and the germline for oocyte development. This Drosophila melanogaster (Fruit fly) protein is Protein ecdysoneless.